The sequence spans 1057 residues: Carbamoyl phosphate synthase large chain (1057 aa).

The carboxyphosphate synthetic domain stretch occupies residues 1–401; it reads MPKRNDIKTI…SLLKAIRSLE (401 aa). ATP-binding residues include Arg-129, Arg-169, Gly-175, Gly-176, Lys-208, Ile-210, Glu-215, Gly-241, Ile-242, His-243, Gln-284, and Glu-298. Residues 133 to 327 form the ATP-grasp 1 domain; that stretch reads RTLMNDLNVP…IAKLAAKIAV (195 aa). Residues Gln-284, Glu-298, and Asn-300 each contribute to the Mg(2+) site. Mn(2+) contacts are provided by Gln-284, Glu-298, and Asn-300. Residues 402 to 546 form an oligomerization domain region; that stretch reads YGVHHLGLPN…YGTYETENES (145 aa). A carbamoyl phosphate synthetic domain region spans residues 547–929; the sequence is IVTDKEKILV…ALFKGLTGSG (383 aa). Residues 671–861 enclose the ATP-grasp 2 domain; it reads EALLRKINVP…MAQLAMRAII (191 aa). 10 residues coordinate ATP: Arg-707, Arg-746, Leu-748, Glu-752, Gly-777, Val-778, His-779, Ser-780, Gln-820, and Glu-832. Residues Gln-820, Glu-832, and Asn-834 each contribute to the Mg(2+) site. Mn(2+) contacts are provided by Gln-820, Glu-832, and Asn-834. An MGS-like domain is found at 930–1057; sequence VEVKDHGTVL…ESMTFTMRQM (128 aa). Residues 930–1057 are allosteric domain; it reads VEVKDHGTVL…ESMTFTMRQM (128 aa).

This sequence belongs to the CarB family. As to quaternary structure, composed of two chains; the small (or glutamine) chain promotes the hydrolysis of glutamine to ammonia, which is used by the large (or ammonia) chain to synthesize carbamoyl phosphate. Tetramer of heterodimers (alpha,beta)4. Requires Mg(2+) as cofactor. The cofactor is Mn(2+).

The catalysed reaction is hydrogencarbonate + L-glutamine + 2 ATP + H2O = carbamoyl phosphate + L-glutamate + 2 ADP + phosphate + 2 H(+). It catalyses the reaction hydrogencarbonate + NH4(+) + 2 ATP = carbamoyl phosphate + 2 ADP + phosphate + 2 H(+). Its pathway is amino-acid biosynthesis; L-arginine biosynthesis; carbamoyl phosphate from bicarbonate: step 1/1. It functions in the pathway pyrimidine metabolism; UMP biosynthesis via de novo pathway; (S)-dihydroorotate from bicarbonate: step 1/3. In terms of biological role, large subunit of the glutamine-dependent carbamoyl phosphate synthetase (CPSase). CPSase catalyzes the formation of carbamoyl phosphate from the ammonia moiety of glutamine, carbonate, and phosphate donated by ATP, constituting the first step of 2 biosynthetic pathways, one leading to arginine and/or urea and the other to pyrimidine nucleotides. The large subunit (synthetase) binds the substrates ammonia (free or transferred from glutamine from the small subunit), hydrogencarbonate and ATP and carries out an ATP-coupled ligase reaction, activating hydrogencarbonate by forming carboxy phosphate which reacts with ammonia to form carbamoyl phosphate. The polypeptide is Carbamoyl phosphate synthase large chain (Staphylococcus aureus (strain Mu3 / ATCC 700698)).